Here is a 515-residue protein sequence, read N- to C-terminus: 2-isopropylmalate synthase (515 aa).

The Pyruvate carboxyltransferase domain maps to 5-267 (VIIFDTTLRD…DTHINTQEIH (263 aa)). Mn(2+) is bound by residues Asp-14, His-202, His-204, and Asn-238. The regulatory domain stretch occupies residues 392–515 (VLDKLSAHST…VADIKNHKHH (124 aa)).

It belongs to the alpha-IPM synthase/homocitrate synthase family. LeuA type 1 subfamily. As to quaternary structure, homodimer. Requires Mn(2+) as cofactor.

It localises to the cytoplasm. It catalyses the reaction 3-methyl-2-oxobutanoate + acetyl-CoA + H2O = (2S)-2-isopropylmalate + CoA + H(+). It functions in the pathway amino-acid biosynthesis; L-leucine biosynthesis; L-leucine from 3-methyl-2-oxobutanoate: step 1/4. Catalyzes the condensation of the acetyl group of acetyl-CoA with 3-methyl-2-oxobutanoate (2-ketoisovalerate) to form 3-carboxy-3-hydroxy-4-methylpentanoate (2-isopropylmalate). In Haemophilus influenzae (strain ATCC 51907 / DSM 11121 / KW20 / Rd), this protein is 2-isopropylmalate synthase.